The primary structure comprises 434 residues: Rubisco accumulation factor 1.1, chloroplastic (434 aa).

Residues 1-51 (MLSLTATTLSSSIFTQSKTHGFFNTRPVYRKPFTTITSALIPASNRQAPPK) constitute a chloroplast transit peptide. The tract at residues 65–254 (IPPKFRSLDT…KAKKAVLREL (190 aa)) is N-terminal alpha-helix. The C-terminal beta sheet stretch occupies residues 273–419 (VPVVRLRFGE…GMVVLVVRPP (147 aa)).

The protein belongs to the RAF family. As to quaternary structure, homodimer.

The protein resides in the plastid. The protein localises to the chloroplast. Required for assembly or stability of RuBisCO. Acts at a postchaperonin step to fold and/or assemble the large subunit (rbcL) into RuBisCO. RAF1 binds first to a rbcL dimer (rbcL(2)), leading to a rbcL(8)-RAF1(4) complex formation. In the next step, RBCS displaces RAF1, thus resulting in holoenzyme formation. This chain is Rubisco accumulation factor 1.1, chloroplastic, found in Arabidopsis thaliana (Mouse-ear cress).